The chain runs to 80 residues: Bowman-Birk type proteinase inhibitor (80 aa).

Cystine bridges form between cysteine 19/cysteine 70, cysteine 20/cysteine 35, cysteine 23/cysteine 66, cysteine 25/cysteine 33, cysteine 41/cysteine 47, cysteine 44/cysteine 59, and cysteine 49/cysteine 57.

Occurs as a monomer, dimer or trimer. The dimer may be the active form. Post-translationally, binds calcium, probably through His-3 to His-6.

Its function is as follows. Protease inhibitor with activity against cysteine, aspartic and serine proteases. Highest activity against serine proteases, in particular trypsin and trypsin-like proteases. This is Bowman-Birk type proteinase inhibitor from Phaseolus acutifolius (Tepary bean).